A 328-amino-acid polypeptide reads, in one-letter code: Protein phosphatase 1 regulatory inhibitor subunit PPP1R7 homolog (328 aa).

LRR repeat units follow at residues 13-36 (IGDSNNVLDLTSYQLHSLDTVELP), 37-59 (PNLIELDLTANRLSGLDSRIAQL), 61-82 (TLKKLSLRQNLIDDSAVEPLSH), 86-110 (LSDLEELVLRDNKLAKVPDVSIFTK), 111-130 (LLVYDISFNEITSLEGISKA), 131-153 (SSTLKELYVSKNEVNKIMEIEHL), 154-177 (HNLQILELGSNRLRVMENLENFTK), 179-196 (EELWLGRNRIKVVNLCGL), 197-221 (KCIKKISLQSNRLTSMKGFEECVAL), 223-240 (ELYLSHNGISKMEGLSAL), 241-264 (VNLRVLDVSNNKLTSVDDIQNLTK), 266-287 (EDLWLNDNQIESLEAITEAVTG), and 289-312 (KEKLTTIYLENNPCAKSSDYVAAV).

As to quaternary structure, interacts with human protein phosphatase PPP1C.

Inhibitor of protein-phosphatase 1 (PP1). Binds to and inhibits PP1 activity. This is Protein phosphatase 1 regulatory inhibitor subunit PPP1R7 homolog from Arabidopsis thaliana (Mouse-ear cress).